The primary structure comprises 322 residues: tRNA U34 carboxymethyltransferase (322 aa).

Residues lysine 91, tryptophan 105, lysine 110, glycine 129, 179 to 180, methionine 195, tyrosine 199, and arginine 314 each bind carboxy-S-adenosyl-L-methionine; that span reads LE.

It belongs to the class I-like SAM-binding methyltransferase superfamily. CmoB family. As to quaternary structure, homotetramer.

It catalyses the reaction carboxy-S-adenosyl-L-methionine + 5-hydroxyuridine(34) in tRNA = 5-carboxymethoxyuridine(34) in tRNA + S-adenosyl-L-homocysteine + H(+). In terms of biological role, catalyzes carboxymethyl transfer from carboxy-S-adenosyl-L-methionine (Cx-SAM) to 5-hydroxyuridine (ho5U) to form 5-carboxymethoxyuridine (cmo5U) at position 34 in tRNAs. The polypeptide is tRNA U34 carboxymethyltransferase (Pseudomonas aeruginosa (strain LESB58)).